The following is a 235-amino-acid chain: Zorya protein ZorB (235 aa).

The chain crosses the membrane as a helical span at residues 25–44 (LMAGLMMVFMFISIAYMHYV). The OmpA-like domain occupies 87–225 (QTLEVRFKSP…RVTFKVVTNA (139 aa)).

This sequence belongs to the MotB family.

It is found in the cell inner membrane. Component of antiviral defense system Zorya type II, composed of ZorA, ZorB and ZorE. Expression of Zorya type II in E.coli (strain MG1655) confers resistance to phages SECphi7 and T7. While most T7 infected Zorya-containing cells undergo abortive infection, a minority produce viable phage progeny. These eventually accumulate to a high multiplicity of infection, leading to culture collapse by 170 minutes after initial infection. ZorA and ZorB probably assemble in the cell inner membrane and exert their effect there. The sequence is that of Zorya protein ZorB from Escherichia coli (strain ATCC 8739 / DSM 1576 / NBRC 3972 / NCIMB 8545 / WDCM 00012 / Crooks).